The following is a 330-amino-acid chain: MASSEKLKALQATMEKIEKNFGKGSIMKMGDDSVEQVEVIPTGSIALNVALGVGGYPRGRIIEIYGPESSGKTTLAIHAIAEAQKAGGIAAFIDAEHAFDRFYAAKLGVDVDNLWISQPDNGEQALEIAEQLIRSSAIDIIVIDSVAALTPKAEIEGDMGDNKVGLQARLMSQALRKLTGTVSKTRTTCIFINQLREKIGVMFGNPETTTGGNALKFYASVRIDIRGSQPIKDGEEVLGKLTKVKVVKNKVAPPFRKAEFDIMFGEGISHSGEIIDLGAELGIIKKSGSWYSYNDTKLGQGRDAAKVCIKDNPELAEELEGLIFEALNKK.

Residue 66 to 73 (GPESSGKT) participates in ATP binding.

Belongs to the RecA family.

The protein resides in the cytoplasm. Its function is as follows. Can catalyze the hydrolysis of ATP in the presence of single-stranded DNA, the ATP-dependent uptake of single-stranded DNA by duplex DNA, and the ATP-dependent hybridization of homologous single-stranded DNAs. It interacts with LexA causing its activation and leading to its autocatalytic cleavage. The chain is Protein RecA from Bacteroides thetaiotaomicron (strain ATCC 29148 / DSM 2079 / JCM 5827 / CCUG 10774 / NCTC 10582 / VPI-5482 / E50).